Consider the following 617-residue polypeptide: ATP-dependent zinc metalloprotease FtsH (617 aa).

At 1 to 7 (MKIPFDR) the chain is on the cytoplasmic side. A helical transmembrane segment spans residues 8 to 28 (WLGWPTLLLLLLGLWLLGSSL). The Periplasmic segment spans residues 29–102 (RDQRTVEAVP…VSYRRVRESN (74 aa)). A helical transmembrane segment spans residues 103-123 (WLSQLLSWMAGPLLLLGFWYF). Residues 124–617 (MSRRIDGQQG…GRPAAIRQVA (494 aa)) are Cytoplasmic-facing. 198 to 205 (GPTGTGKT) contributes to the ATP binding site. Residue histidine 421 coordinates Zn(2+). Residue glutamate 422 is part of the active site. Zn(2+) is bound by residues histidine 425 and aspartate 498.

The protein in the central section; belongs to the AAA ATPase family. It in the C-terminal section; belongs to the peptidase M41 family. As to quaternary structure, homohexamer. Zn(2+) is required as a cofactor.

It localises to the cell inner membrane. In terms of biological role, acts as a processive, ATP-dependent zinc metallopeptidase for both cytoplasmic and membrane proteins. Plays a role in the quality control of integral membrane proteins. In Methylibium petroleiphilum (strain ATCC BAA-1232 / LMG 22953 / PM1), this protein is ATP-dependent zinc metalloprotease FtsH.